The sequence spans 542 residues: La-related protein 7 homolog (542 aa).

In terms of domain architecture, HTH La-type RNA-binding spans 112-239 (VAEELDIKES…KRRFPFNLEQ (128 aa)). An RRM domain is found at 247 to 335 (RTLYIDFLPP…GSIRIITYKK (89 aa)). A xRRM domain is found at 374 to 542 (EIKQNCLIKI…KQNITQNYNK (169 aa)).

This sequence belongs to the LARP7 family. As to quaternary structure, component of the telomerase holoenzyme complex, composed of the catalytic core (the catalytic subunit TERT, the telomerase RNA template component TER and TAP65/p65), which is associated with two heterotrimeric subcomplexes: (i) the replication protein A (RPA)-related subcomplex, composed of TEB1, RPA2/TEB2 and RPA3/TEB3 and (ii) the CST-like subcomplex, composed of TAP75/p75, TAP45/p45 and TAP19/p19. TEB1 and the CST-like subcomplex are tethered to the catalytic core by TAP50/p50.

It is found in the chromosome. It localises to the telomere. Its function is as follows. RNA-binding protein required for assembly of the holoenzyme telomerase ribonucleoprotein (RNP) complex. Telomerase is an essential ribonucleoprotein enzyme that copies new telomeric repeats onto chromosome ends by repetitively synthesizing the short telomere-repeat sequence 5'-TTGGGG-3' using an RNA template component TER. TAP65/p65 specifically binds telomerase RNA template TER and is required for biogenesis and placement of the TER stem-terminus element: TAP65/p65 first protects the 3'-end of TER from degradation and acts as a chaperone to correctly fold TER for protein binding; it then bends TER stem-loop IV to position it for interaction of stem-loop IV with catalytic TERT RNA-binding domain. The protein is La-related protein 7 homolog of Tetrahymena thermophila (strain SB210).